The sequence spans 444 residues: Chromosome partition protein MukF (444 aa).

Residues 211–239 form a leucine-zipper region; it reads LDETSGNLRELQDTLNAAGDKLQAQLLRI.

The protein belongs to the MukF family. In terms of assembly, interacts, and probably forms a ternary complex, with MukE and MukB via its C-terminal region. The complex formation is stimulated by calcium or magnesium. It is required for an interaction between MukE and MukB.

It is found in the cytoplasm. Its subcellular location is the nucleoid. Its function is as follows. Involved in chromosome condensation, segregation and cell cycle progression. May participate in facilitating chromosome segregation by condensation DNA from both sides of a centrally located replisome during cell division. Not required for mini-F plasmid partitioning. Probably acts via its interaction with MukB and MukE. Overexpression results in anucleate cells. It has a calcium binding activity. This is Chromosome partition protein MukF from Actinobacillus succinogenes (strain ATCC 55618 / DSM 22257 / CCUG 43843 / 130Z).